A 176-amino-acid polypeptide reads, in one-letter code: Inner membrane-spanning protein YciB (176 aa).

5 helical membrane-spanning segments follow: residues 24-44 (TATAVAIVATLVQIAWVAFRH), 49-69 (PMLWVSLGVVTVFGGATLVLH), 76-96 (WKPTVLYWAFSVALIVSQLAF), 119-139 (LSVVWAIFFVLLGLVNLFVAY), and 149-169 (FKLFGATGCLVVFIVGQSLWL).

The protein belongs to the YciB family.

It is found in the cell inner membrane. Its function is as follows. Plays a role in cell envelope biogenesis, maintenance of cell envelope integrity and membrane homeostasis. The protein is Inner membrane-spanning protein YciB of Paraburkholderia phytofirmans (strain DSM 17436 / LMG 22146 / PsJN) (Burkholderia phytofirmans).